A 435-amino-acid chain; its full sequence is Actin-like protein 7A (435 aa).

Residues 1–64 form a disordered region; it reads MWAPPAAIMG…TESKAAKERP (64 aa). Low complexity predominate over residues 20-31; sequence QAPLQTQALQTA. The tract at residues 31–51 is required for interaction with TES; that stretch reads ASLRDGPAKRAVWVRHTSSEP. A compositionally biased stretch (basic and acidic residues) spans 55-64; the sequence is TESKAAKERP.

It belongs to the actin family. Interacts (via N-terminus) with TES (via LIM domain 2). Heterodimer with TES; the heterodimer interacts with ENAH to form a heterotrimer. Interacts with ACTL9. Interacts with CYLC1; the interaction may be relevant for proper acrosome attachment to the nuclear envelope. In terms of tissue distribution, strongly expressed in testis. Also expressed in other tissues.

The protein resides in the cytoplasm. The protein localises to the cytoskeleton. It is found in the golgi apparatus. Its subcellular location is the nucleus. It localises to the cytoplasmic vesicle. The protein resides in the secretory vesicle. The protein localises to the acrosome. In terms of biological role, essential for normal spermatogenesis and male fertility. Required for normal sperm head morphology, acroplaxome formation, acrosome attachment, and acrosome granule stability. May anchor and stabilize acrosomal adherence to the acroplaxome at least in part by facilitating the presence of F-actin in the subacrosomal space. May play an important role in formation and fusion of Golgi-derived vesicles during acrosome biogenesis. The protein is Actin-like protein 7A (ACTL7A) of Homo sapiens (Human).